The chain runs to 267 residues: Large ribosomal subunit protein uL4 (267 aa).

It belongs to the universal ribosomal protein uL4 family. In terms of assembly, part of the 50S ribosomal subunit.

Functionally, one of the primary rRNA binding proteins, this protein initially binds near the 5'-end of the 23S rRNA. It is important during the early stages of 50S assembly. It makes multiple contacts with different domains of the 23S rRNA in the assembled 50S subunit and ribosome. Its function is as follows. Forms part of the polypeptide exit tunnel. This Saccharolobus islandicus (strain M.16.27) (Sulfolobus islandicus) protein is Large ribosomal subunit protein uL4.